We begin with the raw amino-acid sequence, 308 residues long: Porphobilinogen deaminase (308 aa).

Cysteine 241 carries the post-translational modification S-(dipyrrolylmethanemethyl)cysteine.

This sequence belongs to the HMBS family. As to quaternary structure, monomer. It depends on dipyrromethane as a cofactor.

The enzyme catalyses 4 porphobilinogen + H2O = hydroxymethylbilane + 4 NH4(+). Its pathway is porphyrin-containing compound metabolism; protoporphyrin-IX biosynthesis; coproporphyrinogen-III from 5-aminolevulinate: step 2/4. In terms of biological role, tetrapolymerization of the monopyrrole PBG into the hydroxymethylbilane pre-uroporphyrinogen in several discrete steps. This chain is Porphobilinogen deaminase, found in Staphylococcus aureus (strain Newman).